The chain runs to 372 residues: Bifunctional coenzyme PQQ synthesis protein C/D (372 aa).

The pqqC stretch occupies residues 1–267 (MTAQFPPPVP…VAETNSAEDS (267 aa)). Residues 260-288 (ETNSAEDSPAAAASPAATTAEPTAFSGSD) are disordered. A compositionally biased stretch (low complexity) spans 264–283 (AEDSPAAAASPAATTAEPTA). The interval 268-280 (PAAAASPAATTAE) is linker. Positions 281–372 (PTAFSGSDVP…GLAQKRVLER (92 aa)) are pqqD.

The protein in the N-terminal section; belongs to the PqqC family. It in the C-terminal section; belongs to the PqqD family. Monomer. Interacts with PqqE.

The catalysed reaction is 6-(2-amino-2-carboxyethyl)-7,8-dioxo-1,2,3,4,7,8-hexahydroquinoline-2,4-dicarboxylate + 3 O2 = pyrroloquinoline quinone + 2 H2O2 + 2 H2O + H(+). It participates in cofactor biosynthesis; pyrroloquinoline quinone biosynthesis. Functionally, the PqqC region is involved in ring cyclization and eight-electron oxidation of 3a-(2-amino-2-carboxyethyl)-4,5-dioxo-4,5,6,7,8,9-hexahydroquinoline-7,9-dicarboxylic-acid to PQQ. Its function is as follows. The PqqD region functions as a PqqA binding domain and presents PqqA to PqqE. The protein is Bifunctional coenzyme PQQ synthesis protein C/D (pqqCD) of Methylorubrum extorquens (strain ATCC 14718 / DSM 1338 / JCM 2805 / NCIMB 9133 / AM1) (Methylobacterium extorquens).